Consider the following 481-residue polypeptide: uncharacterized protein (481 aa).

Positions 1–18 (MSRLPSKTKYHSSHRSLN) are enriched in basic residues. The segment at 1–37 (MSRLPSKTKYHSSHRSLNRKTPLLQRSSETNSLRESG) is disordered. Polar residues predominate over residues 24–34 (LQRSSETNSLR). A run of 2 helical transmembrane segments spans residues 172-191 (SIST…AGAI) and 195-214 (AAAG…YLCW).

The protein resides in the membrane. This is an uncharacterized protein from Coxiella burnetii (strain RSA 493 / Nine Mile phase I).